The primary structure comprises 410 residues: Serine hydroxymethyltransferase (410 aa).

(6S)-5,6,7,8-tetrahydrofolate-binding positions include Leu116 and Gly120–Leu122. N6-(pyridoxal phosphate)lysine is present on Lys225.

It belongs to the SHMT family. As to quaternary structure, homodimer. Pyridoxal 5'-phosphate serves as cofactor.

The protein resides in the cytoplasm. It catalyses the reaction (6R)-5,10-methylene-5,6,7,8-tetrahydrofolate + glycine + H2O = (6S)-5,6,7,8-tetrahydrofolate + L-serine. It functions in the pathway one-carbon metabolism; tetrahydrofolate interconversion. It participates in amino-acid biosynthesis; glycine biosynthesis; glycine from L-serine: step 1/1. In terms of biological role, catalyzes the reversible interconversion of serine and glycine with tetrahydrofolate (THF) serving as the one-carbon carrier. This reaction serves as the major source of one-carbon groups required for the biosynthesis of purines, thymidylate, methionine, and other important biomolecules. Also exhibits THF-independent aldolase activity toward beta-hydroxyamino acids, producing glycine and aldehydes, via a retro-aldol mechanism. The sequence is that of Serine hydroxymethyltransferase from Lacticaseibacillus casei (strain BL23) (Lactobacillus casei).